The primary structure comprises 787 residues: Lon protease (787 aa).

In terms of domain architecture, Lon N-terminal spans 12–210 (LPLIPLRGLA…LIYSILLEEI (199 aa)). Residue 362 to 369 (GPPGTGKT) participates in ATP binding. Residues 599–780 (NPQIGLVNGL…DEVLEQALLK (182 aa)) enclose the Lon proteolytic domain. Residues Ser-686 and Lys-729 contribute to the active site.

Belongs to the peptidase S16 family. Homohexamer. Organized in a ring with a central cavity.

It localises to the cytoplasm. It carries out the reaction Hydrolysis of proteins in presence of ATP.. In terms of biological role, ATP-dependent serine protease that mediates the selective degradation of mutant and abnormal proteins as well as certain short-lived regulatory proteins. Required for cellular homeostasis and for survival from DNA damage and developmental changes induced by stress. Degrades polypeptides processively to yield small peptide fragments that are 5 to 10 amino acids long. Binds to DNA in a double-stranded, site-specific manner. This chain is Lon protease, found in Clostridioides difficile (strain 630) (Peptoclostridium difficile).